The following is a 444-amino-acid chain: Tubulin beta-8 chain (444 aa).

Positions 1–4 match the MREI motif motif; it reads MREI. Residues Gln-11, Glu-69, Ser-138, Gly-142, Thr-143, and Gly-144 each contribute to the GTP site. Position 69 (Glu-69) interacts with Mg(2+). Phosphoserine; by CDK1 is present on Ser-172. GTP contacts are provided by Asn-204 and Asn-226. Positions 423 to 444 are disordered; the sequence is QQYQDATAEEEEDEEYAEEEVA. The span at 429–444 shows a compositional bias: acidic residues; sequence TAEEEEDEEYAEEEVA. Glu-436 is subject to 5-glutamyl polyglutamate.

This sequence belongs to the tubulin family. As to quaternary structure, dimer of alpha and beta chains. A typical microtubule is a hollow water-filled tube with an outer diameter of 25 nm and an inner diameter of 15 nM. Alpha-beta heterodimers associate head-to-tail to form protofilaments running lengthwise along the microtubule wall with the beta-tubulin subunit facing the microtubule plus end conferring a structural polarity. Microtubules usually have 13 protofilaments but different protofilament numbers can be found in some organisms and specialized cells. Mg(2+) serves as cofactor. Post-translationally, some glutamate residues at the C-terminus are polyglycylated, resulting in polyglycine chains on the gamma-carboxyl group. Glycylation is mainly limited to tubulin incorporated into axonemes (cilia and flagella) whereas glutamylation is prevalent in neuronal cells, centrioles, axonemes, and the mitotic spindle. Both modifications can coexist on the same protein on adjacent residues, and lowering polyglycylation levels increases polyglutamylation, and reciprocally. Cilia and flagella glycylation is required for their stability and maintenance. Flagella glycylation controls sperm motility. In terms of processing, some glutamate residues at the C-terminus are polyglutamylated, resulting in polyglutamate chains on the gamma-carboxyl group. Polyglutamylation plays a key role in microtubule severing by spastin (SPAST). SPAST preferentially recognizes and acts on microtubules decorated with short polyglutamate tails: severing activity by SPAST increases as the number of glutamates per tubulin rises from one to eight, but decreases beyond this glutamylation threshold. Glutamylation is also involved in cilia motility. Phosphorylated on Ser-172 by CDK1 during the cell cycle, from metaphase to telophase, but not in interphase. This phosphorylation inhibits tubulin incorporation into microtubules.

The protein localises to the cytoplasm. Its subcellular location is the cytoskeleton. It localises to the spindle. In terms of biological role, tubulin is the major constituent of microtubules, a cylinder consisting of laterally associated linear protofilaments composed of alpha- and beta-tubulin heterodimers. Microtubules grow by the addition of GTP-tubulin dimers to the microtubule end, where a stabilizing cap forms. Below the cap, tubulin dimers are in GDP-bound state, owing to GTPase activity of alpha-tubulin. Has a key role in meiotic spindle assembly and oocyte maturation. The protein is Tubulin beta-8 chain (TUBB8) of Pan troglodytes (Chimpanzee).